Consider the following 546-residue polypeptide: Inosine-5'-monophosphate dehydrogenase (546 aa).

CBS domains are found at residues 135–197 (FILD…VTAI) and 198–254 (MSTD…PLAS). Residues 292-294 (DSS) and 342-344 (GMG) contribute to the NAD(+) site. 2 residues coordinate K(+): glycine 344 and glycine 346. Serine 347 contributes to the IMP binding site. A K(+)-binding site is contributed by cysteine 349. The active-site Thioimidate intermediate is cysteine 349. IMP-binding positions include 382–384 (DGG), 405–406 (GG), and 430–434 (YRGMG). The active-site Proton acceptor is arginine 460. Glutamine 472 contacts IMP. Residues glutamate 531 and glycine 532 each contribute to the K(+) site.

It belongs to the IMPDH/GMPR family. Homotetramer. K(+) is required as a cofactor.

The protein localises to the cytoplasm. The catalysed reaction is IMP + NAD(+) + H2O = XMP + NADH + H(+). The protein operates within purine metabolism; XMP biosynthesis via de novo pathway; XMP from IMP: step 1/1. With respect to regulation, mycophenolic acid (MPA) is a non-competitive inhibitor that prevents formation of the closed enzyme conformation by binding to the same site as the amobile flap. In contrast, mizoribine monophosphate (MZP) is a competitive inhibitor that induces the closed conformation. MPA is a potent inhibitor of mammalian IMPDHs but a poor inhibitor of the bacterial enzymes. MZP is a more potent inhibitor of bacterial IMPDH. Functionally, catalyzes the conversion of inosine 5'-phosphate (IMP) to xanthosine 5'-phosphate (XMP), the first committed and rate-limiting step in the de novo synthesis of guanine nucleotides, and therefore plays an important role in the regulation of cell growth. This chain is Inosine-5'-monophosphate dehydrogenase, found in Aspergillus fumigatus (strain ATCC MYA-4609 / CBS 101355 / FGSC A1100 / Af293) (Neosartorya fumigata).